A 447-amino-acid polypeptide reads, in one-letter code: Argininosuccinate synthase (447 aa).

Residues A17–S25 and A43 contribute to the ATP site. Y99 is a binding site for L-citrulline. Residues G129 and T131 each contribute to the ATP site. L-aspartate contacts are provided by T131, N135, and D136. N135 contacts L-citrulline. An ATP-binding site is contributed by D136. Residues R139 and S192 each coordinate L-citrulline. D194 is a binding site for ATP. T201, E203, and E280 together coordinate L-citrulline.

The protein belongs to the argininosuccinate synthase family. Type 2 subfamily. In terms of assembly, homotetramer.

It is found in the cytoplasm. It carries out the reaction L-citrulline + L-aspartate + ATP = 2-(N(omega)-L-arginino)succinate + AMP + diphosphate + H(+). It functions in the pathway amino-acid biosynthesis; L-arginine biosynthesis; L-arginine from L-ornithine and carbamoyl phosphate: step 2/3. The polypeptide is Argininosuccinate synthase (Salmonella heidelberg (strain SL476)).